We begin with the raw amino-acid sequence, 153 residues long: Ribosome maturation factor RimP (153 aa).

It belongs to the RimP family.

The protein localises to the cytoplasm. In terms of biological role, required for maturation of 30S ribosomal subunits. The chain is Ribosome maturation factor RimP from Coxiella burnetii (strain CbuK_Q154) (Coxiella burnetii (strain Q154)).